Here is a 344-residue protein sequence, read N- to C-terminus: DNA-directed RNA polymerase subunit alpha (344 aa).

An alpha N-terminal domain (alpha-NTD) region spans residues 1–232 (MGQYTINLRE…HLFLPPFGLE (232 aa)). The interval 270–344 (LIKDQFLEYS…KRFGINLKLK (75 aa)) is alpha C-terminal domain (alpha-CTD).

The protein belongs to the RNA polymerase alpha chain family. As to quaternary structure, in plastids the minimal PEP RNA polymerase catalytic core is composed of four subunits: alpha, beta, beta', and beta''. When a (nuclear-encoded) sigma factor is associated with the core the holoenzyme is formed, which can initiate transcription.

It is found in the plastid. It localises to the chloroplast. It carries out the reaction RNA(n) + a ribonucleoside 5'-triphosphate = RNA(n+1) + diphosphate. Its function is as follows. DNA-dependent RNA polymerase catalyzes the transcription of DNA into RNA using the four ribonucleoside triphosphates as substrates. This is DNA-directed RNA polymerase subunit alpha from Spirogyra maxima (Green alga).